Consider the following 469-residue polypeptide: Serine hydroxymethyltransferase, cytosolic (469 aa).

Residue K248 is modified to N6-(pyridoxal phosphate)lysine.

This sequence belongs to the SHMT family. In terms of assembly, homotetramer. Pyridoxal 5'-phosphate serves as cofactor.

It localises to the cytoplasm. The catalysed reaction is (6R)-5,10-methylene-5,6,7,8-tetrahydrofolate + glycine + H2O = (6S)-5,6,7,8-tetrahydrofolate + L-serine. Its pathway is one-carbon metabolism; tetrahydrofolate interconversion. Functionally, interconversion of serine and glycine. The sequence is that of Serine hydroxymethyltransferase, cytosolic (SHM2) from Candida glabrata (strain ATCC 2001 / BCRC 20586 / JCM 3761 / NBRC 0622 / NRRL Y-65 / CBS 138) (Yeast).